The chain runs to 259 residues: MTEPTPAVPETDDLAEPRLVIEPGVAARFCAVAEPVLMAMGYRLVRIKVSGDAGCTVQIMAERPDGTMLIDDCEAASRALSPVLDVADPIDRAYRLEISSPGIDRPLVRRSDFARYAGHLVKIEMAVPHQGRKRYRGLLDGVEGDAVRVQREGATKDEDPLVLLPMHDIGDARLVLTDELIAESMRRGKQAERDLKQSLGLAPEPPPHAKRSDPKKSHAPKRGPKAAKAPTKPKPQNTKQHRLAADKARRGEIDTSEGD.

A disordered region spans residues Ser198 to Asp259. Basic and acidic residues predominate over residues Leu243–Ile253.

This sequence belongs to the RimP family.

Its subcellular location is the cytoplasm. Functionally, required for maturation of 30S ribosomal subunits. The sequence is that of Ribosome maturation factor RimP from Rhodopseudomonas palustris (strain TIE-1).